An 821-amino-acid chain; its full sequence is MQERYDFKAIEAKWQKKWEELKLYEVDDFSEKPKYYCLEMFPYPSGKLHMGHVRNYSIGDVVARYKRMRGYAVLHPMGWDAFGLPAENAAIKHGNVHPADWTWDNIANMRRQLKELGISYDWRREIATCHPEYYRWTQWLFLQFYKKGLAYKKKAPVNWCPGCQTVLANEQVIDGECERCHSRVEKKELEQWFFKITAYAERLLQDIKKLTGWPEKVKIMQENWIGRSEGAEITFKIKGHEETISVFTTRPDTIFGVTYMVLAPEHPLVEKISRGTQYEKDVLEFKRKMMYLSEIERTAETAEKEGVFTGAYAINPFTGEEIPILLANYVLVEYGTGAVMGVPAHDQRDFLFAKKYNLPIKVVITPPGQELKAEELTEAYTGEGILVNSGEFTGLANKEAIRIITQEAEKRGFGKYRVNYRLRDWLISRQRYWGAPIPVLYCEKCGIVPVPEDQLPVVLPYNVEFRPTGESPLKYVPEFLNATCPECGGPATRETDTMDTFICSSWYYYRYTSPRDKQQPWSKEKVERWLPVDQYIGGVEHAILHLLYSRFFTKVLYDLGLVHVDEPFTNLLTQGMVLKDGAKMSKSKGNVVSPEEIVEKYGADTARLFILFAAPPERDLEWSDQGVEGSFRFLNRVWRLIYQTKDRISDELREFSAKDKELNRLLHATIKKVTEDIEERFNFNTAISAIMELVNGLYQYKEGEINPGLLKEALNKLVILLAPFAPHIAEELWEALGNKQSVHLEKWPEYDEEALITEEVEIVIQVNGKVKDRVMVPRNAAEDELKEIALNTPKIKELTADKKIIKVIIVPEKLINIVVAG.

Positions 42-52 (PYPSGKLHMGH) match the 'HIGH' region motif. The 'KMSKS' region signature appears at 583-587 (KMSKS). Lysine 586 is an ATP binding site.

The protein belongs to the class-I aminoacyl-tRNA synthetase family.

The protein localises to the cytoplasm. The enzyme catalyses tRNA(Leu) + L-leucine + ATP = L-leucyl-tRNA(Leu) + AMP + diphosphate. In Carboxydothermus hydrogenoformans (strain ATCC BAA-161 / DSM 6008 / Z-2901), this protein is Leucine--tRNA ligase.